The chain runs to 1792 residues: D-lysergyl-peptide-synthetase subunit 3 (1792 aa).

An adenylation (A) domain region spans residues 239–642 (FRQRCDLHPN…GRKDSQIKIR (404 aa)). Residues 779–853 (SNEEHRLQRM…DLARKASQSV (75 aa)) enclose the Carrier domain. Ser813 is subject to O-(pantetheine 4'-phosphoryl)serine. The tract at residues 895-1285 (EDIYPCTPMQ…HILGQIHGKE (391 aa)) is condensation (C) domain. Residues 1415–1640 (VTGANGFIGT…AGEFNSSAGS (226 aa)) form a reductase (R) domain region.

It belongs to the NRP synthetase family.

The protein operates within alkaloid biosynthesis; ergot alkaloid biosynthesis. D-lysergyl-peptide-synthetase subunit 3; part of the gene cluster that mediates the biosynthesis of fungal ergot alkaloid. DmaW catalyzes the first step of ergot alkaloid biosynthesis by condensing dimethylallyl diphosphate (DMAP) and tryptophan to form 4-dimethylallyl-L-tryptophan. The second step is catalyzed by the methyltransferase easF that methylates 4-dimethylallyl-L-tryptophan in the presence of S-adenosyl-L-methionine, resulting in the formation of 4-dimethylallyl-L-abrine. The catalase easC and the FAD-dependent oxidoreductase easE then transform 4-dimethylallyl-L-abrine to chanoclavine-I which is further oxidized by easD in the presence of NAD(+), resulting in the formation of chanoclavine-I aldehyde. Agroclavine dehydrogenase easG then mediates the conversion of chanoclavine-I aldehyde to agroclavine via a non-enzymatic adduct reaction: the substrate is an iminium intermediate that is formed spontaneously from chanoclavine-I aldehyde in the presence of glutathione. The presence of easA is not required to complete this reaction. Further conversion of agroclavine to paspalic acid is a two-step process involving oxidation of agroclavine to elymoclavine and of elymoclavine to paspalic acid, the second step being performed by the elymoclavine oxidase cloA. Paspalic acid is then further converted to D-lysergic acid. Ergopeptines are assembled from D-lysergic acid and three different amino acids by the D-lysergyl-peptide-synthetases composed each of a monomudular and a trimodular nonribosomal peptide synthetase subunit. LpsB and lpsC encode the monomodular subunits responsible for D-lysergic acid activation and incorporation into the ergopeptine backbone. LpsA1 and A2 subunits encode the trimodular nonribosomal peptide synthetase assembling the tripeptide portion of ergopeptines. LpsA1 is responsible for formation of the major ergopeptine, ergotamine, and lpsA2 for alpha-ergocryptine, the minor ergopeptine of the total alkaloid mixture elaborated by C.purpurea. D-lysergyl-tripeptides are assembled by the nonribosomal peptide synthetases and released as N-(D-lysergyl-aminoacyl)-lactams. Cyclolization of the D-lysergyl-tripeptides is performed by the Fe(2+)/2-ketoglutarate-dependent dioxygenase easH which introduces a hydroxyl group into N-(D-lysergyl-aminoacyl)-lactam at alpha-C of the aminoacyl residue followed by spontaneous condensation with the terminal lactam carbonyl group. This Claviceps purpurea (strain 20.1) (Ergot fungus) protein is D-lysergyl-peptide-synthetase subunit 3.